The chain runs to 158 residues: uncharacterized protein (158 aa).

An HTH asnC-type domain is found at 12–73 (LDEIDRAILR…LINPFKAGYE (62 aa)). Residues 31–50 (YSEISRRINVPESTVRARVN) constitute a DNA-binding region (H-T-H motif).

This is an uncharacterized protein from Pyrococcus horikoshii (strain ATCC 700860 / DSM 12428 / JCM 9974 / NBRC 100139 / OT-3).